A 31-amino-acid chain; its full sequence is Cytochrome b6-f complex subunit 6 (31 aa).

The chain crosses the membrane as a helical span at residues Ile4–Gly24.

It belongs to the PetL family. In terms of assembly, the 4 large subunits of the cytochrome b6-f complex are cytochrome b6, subunit IV (17 kDa polypeptide, PetD), cytochrome f and the Rieske protein, while the 4 small subunits are PetG, PetL, PetM and PetN. The complex functions as a dimer.

The protein localises to the plastid. It is found in the chloroplast thylakoid membrane. In terms of biological role, component of the cytochrome b6-f complex, which mediates electron transfer between photosystem II (PSII) and photosystem I (PSI), cyclic electron flow around PSI, and state transitions. PetL is important for photoautotrophic growth as well as for electron transfer efficiency and stability of the cytochrome b6-f complex. The sequence is that of Cytochrome b6-f complex subunit 6 from Physcomitrium patens (Spreading-leaved earth moss).